The primary structure comprises 609 residues: Polyadenylate-binding protein 7 (609 aa).

RRM domains lie at 24 to 102, 112 to 189, 201 to 278, and 304 to 381; these read ASLY…WSVR, GNVF…KFMK, TNLY…RAQK, and SNIY…IAQK. Residues 509–586 enclose the PABC domain; that stretch reads EMKKSIQQRQ…AFEVLKSSKT (78 aa).

Belongs to the polyadenylate-binding protein type-1 family. In terms of tissue distribution, expressed predominantly in siliques.

It is found in the cytoplasm. The protein resides in the nucleus. Its function is as follows. Binds the poly(A) tail of mRNA. Appears to be an important mediator of the multiple roles of the poly(A) tail in mRNA biogenesis, stability and translation. The chain is Polyadenylate-binding protein 7 (PAB7) from Arabidopsis thaliana (Mouse-ear cress).